A 247-amino-acid polypeptide reads, in one-letter code: Putative methyltransferase YqeM (247 aa).

The protein belongs to the methyltransferase superfamily.

Its function is as follows. May be a S-adenosyl-L-methionine (SAM)-dependent methyltransferase. The chain is Putative methyltransferase YqeM (yqeM) from Bacillus subtilis (strain 168).